We begin with the raw amino-acid sequence, 284 residues long: WUSCHEL-related homeobox 10 (284 aa).

Residues 1 to 43 (MDRTATASWEVMSRRGEQQQQLMMQAPASHNGGSGGGEPARSR) form a disordered region. A DNA-binding region (homeobox; WUS-type) is located at residues 39–103 (PARSRWAPKP…NRRSRSRRRA (65 aa)).

It belongs to the WUS homeobox family.

The protein resides in the nucleus. Functionally, transcription factor which may be involved in developmental processes. The sequence is that of WUSCHEL-related homeobox 10 (WOX10) from Oryza sativa subsp. japonica (Rice).